We begin with the raw amino-acid sequence, 136 residues long: NLP effector protein 13 (136 aa).

Residues 1 to 9 (MYSWYFPKD) carry the Conserved undecapeptide motif I motif. Residues 16-22 (GHRHDWE) carry the Hepta-peptide GHRHDWE motif II motif.

This sequence belongs to the Necrosis inducing protein (NPP1) family.

The protein resides in the secreted. Functionally, secreted effector that contributes moderately to virulence during infection by P.capsici. Causes only small yellow areas at 3 days after inoculation of host C.annuum leaves; these areas expand somewhat and became necrotic at 7 days after inoculation. Leads only to chlorotic areas, without necrosis at 7 days after non-host N.benthamiana leaves infection. The protein is NLP effector protein 13 of Phytophthora capsici.